A 380-amino-acid chain; its full sequence is Phospho-N-acetylmuramoyl-pentapeptide-transferase (380 aa).

11 consecutive transmembrane segments (helical) span residues 26-46 (IVAA…LFIE), 75-95 (MGGA…ADLG), 98-118 (LVWA…WDDW), 135-155 (LVLQ…DWQP), 160-180 (GFPF…PFVP), 183-203 (LFSP…VVAT), 222-242 (IVSS…IAGF), 259-279 (LGVF…YNTY), 283-303 (VFMG…LAVL), 311-331 (AILH…VWSF), and 357-377 (KIIV…LMSL).

The protein belongs to the glycosyltransferase 4 family. MraY subfamily. It depends on Mg(2+) as a cofactor.

The protein resides in the cell inner membrane. It carries out the reaction UDP-N-acetyl-alpha-D-muramoyl-L-alanyl-gamma-D-glutamyl-meso-2,6-diaminopimeloyl-D-alanyl-D-alanine + di-trans,octa-cis-undecaprenyl phosphate = di-trans,octa-cis-undecaprenyl diphospho-N-acetyl-alpha-D-muramoyl-L-alanyl-D-glutamyl-meso-2,6-diaminopimeloyl-D-alanyl-D-alanine + UMP. It functions in the pathway cell wall biogenesis; peptidoglycan biosynthesis. Functionally, catalyzes the initial step of the lipid cycle reactions in the biosynthesis of the cell wall peptidoglycan: transfers peptidoglycan precursor phospho-MurNAc-pentapeptide from UDP-MurNAc-pentapeptide onto the lipid carrier undecaprenyl phosphate, yielding undecaprenyl-pyrophosphoryl-MurNAc-pentapeptide, known as lipid I. The sequence is that of Phospho-N-acetylmuramoyl-pentapeptide-transferase from Anaeromyxobacter sp. (strain Fw109-5).